Reading from the N-terminus, the 187-residue chain is ATP synthase subunit b (187 aa).

The chain crosses the membrane as a helical span at residues 36-53 (PYQWVSVAMLVLIAIMLW).

Belongs to the ATPase B chain family. F-type ATPases have 2 components, F(1) - the catalytic core - and F(0) - the membrane proton channel. F(1) has five subunits: alpha(3), beta(3), gamma(1), delta(1), epsilon(1). F(0) has four main subunits: a(1), b(2) and c(10-14). The alpha and beta chains form an alternating ring which encloses part of the gamma chain. F(1) is attached to F(0) by a central stalk formed by the gamma and epsilon chains, while a peripheral stalk is formed by the delta and b chains.

The protein resides in the cell inner membrane. In terms of biological role, f(1)F(0) ATP synthase produces ATP from ADP in the presence of a proton or sodium gradient. F-type ATPases consist of two structural domains, F(1) containing the extramembraneous catalytic core and F(0) containing the membrane proton channel, linked together by a central stalk and a peripheral stalk. During catalysis, ATP synthesis in the catalytic domain of F(1) is coupled via a rotary mechanism of the central stalk subunits to proton translocation. Component of the F(0) channel, it forms part of the peripheral stalk, linking F(1) to F(0). The sequence is that of ATP synthase subunit b from Erythrobacter litoralis (strain HTCC2594).